A 394-amino-acid chain; its full sequence is MPMIETRTDRMLLNFGPHHPSMHGVLRLLVTLDGENIVDCEPVIGYLHRGMEKIAENRTVVQYLPYVSRWDYGAGMFNEAITVNAVEKLAGIPVPRRASYLRVIMLELTRITNHLLWFGPFLADLGAQTPFLYAMREREWILDLFEAVTGMRLINNNYFRVGGVAVDLPYGWTEKCLDFCEYFLPKVDEYERLVTDNPIFRRRLEGIGVISKQDAINWGLSGPMLRACGVNWDLRKVDHYECYDDFDWEVAVYPEGDCLARYRVRMKEMRESCKIVQQAVKALPGGPFENLEAKRMLEGPKSEWNKGDYQFISKKPSANFKIPKGEAYVRVESAKGELGIYIVGDDNVCPWRWKIRPPGFVNLQVLPQLIRGMKVADMIAILGSIDIIMGEVDR.

It belongs to the complex I 49 kDa subunit family. In terms of assembly, NDH-1 can be composed of about 15 different subunits; different subcomplexes with different compositions have been identified which probably have different functions.

The protein resides in the cellular thylakoid membrane. It catalyses the reaction a plastoquinone + NADH + (n+1) H(+)(in) = a plastoquinol + NAD(+) + n H(+)(out). The catalysed reaction is a plastoquinone + NADPH + (n+1) H(+)(in) = a plastoquinol + NADP(+) + n H(+)(out). Its function is as follows. NDH-1 shuttles electrons from an unknown electron donor, via FMN and iron-sulfur (Fe-S) centers, to quinones in the respiratory and/or the photosynthetic chain. The immediate electron acceptor for the enzyme in this species is believed to be plastoquinone. Couples the redox reaction to proton translocation, and thus conserves the redox energy in a proton gradient. Cyanobacterial NDH-1 also plays a role in inorganic carbon-concentration. This chain is NAD(P)H-quinone oxidoreductase subunit H, found in Synechococcus sp. (strain JA-3-3Ab) (Cyanobacteria bacterium Yellowstone A-Prime).